Reading from the N-terminus, the 195-residue chain is Orotate phosphoribosyltransferase (195 aa).

5-phospho-alpha-D-ribose 1-diphosphate is bound by residues Arg-86, Lys-90, His-92, and 111–119; that span reads DDVATTGVS. Residues Thr-115 and Arg-143 each coordinate orotate.

It belongs to the purine/pyrimidine phosphoribosyltransferase family. PyrE subfamily. As to quaternary structure, homodimer. It depends on Mg(2+) as a cofactor.

It carries out the reaction orotidine 5'-phosphate + diphosphate = orotate + 5-phospho-alpha-D-ribose 1-diphosphate. The protein operates within pyrimidine metabolism; UMP biosynthesis via de novo pathway; UMP from orotate: step 1/2. Catalyzes the transfer of a ribosyl phosphate group from 5-phosphoribose 1-diphosphate to orotate, leading to the formation of orotidine monophosphate (OMP). This is Orotate phosphoribosyltransferase from Saccharolobus solfataricus (strain ATCC 35092 / DSM 1617 / JCM 11322 / P2) (Sulfolobus solfataricus).